A 160-amino-acid polypeptide reads, in one-letter code: Cytochrome b6-f complex subunit 4 (160 aa).

Helical transmembrane passes span 36–56 (ILYM…GLSI), 95–115 (LVGV…PFIE), and 127–147 (PIAT…GIGA).

The protein belongs to the cytochrome b family. PetD subfamily. As to quaternary structure, the 4 large subunits of the cytochrome b6-f complex are cytochrome b6, subunit IV (17 kDa polypeptide, petD), cytochrome f and the Rieske protein, while the 4 small subunits are petG, petL, petM and petN. The complex functions as a dimer.

The protein resides in the plastid. The protein localises to the chloroplast thylakoid membrane. Its function is as follows. Component of the cytochrome b6-f complex, which mediates electron transfer between photosystem II (PSII) and photosystem I (PSI), cyclic electron flow around PSI, and state transitions. The polypeptide is Cytochrome b6-f complex subunit 4 (Gracilaria tenuistipitata var. liui (Red alga)).